A 445-amino-acid polypeptide reads, in one-letter code: StAR-related lipid transfer protein 3 (445 aa).

Topologically, residues 1–51 (MSKLPRELTRDLERSLPAVASLGSSLSHSQSLSSHLLPPPEKRRAISDVRR) are cytoplasmic. The 172-residue stretch at 46 to 217 (ISDVRRTFCL…YSPPESFAGS (172 aa)) folds into the MENTAL domain. The chain crosses the membrane as a helical span at residues 52–72 (TFCLFVTFDLLFISLLWIIEL). Topologically, residues 73–94 (NTNTGIRKNLEQEIIQYNFKTS) are extracellular. Residues 95 to 115 (FFDIFVLAFFRFSGLLLGYAV) traverse the membrane as a helical segment. The Cytoplasmic portion of the chain corresponds to 116–120 (LRLRH). The helical transmembrane segment at 121 to 141 (WWVIAVTTLVSSAFLIVKVIL) threads the bilayer. The Extracellular portion of the chain corresponds to 142-148 (SELLSKG). A helical membrane pass occupies residues 149–169 (AFGYLLPIVSFVLAWLETWFL). Residues 170 to 445 (DFKVLPQEAE…QRISELGARA (276 aa)) lie on the Cytoplasmic side of the membrane. Residues 206–212 (QFYSPPE) carry the FFAT motif. Residue Ser209 is modified to Phosphoserine. Positions 230 to 443 (SFSAQEREYI…LRQRISELGA (214 aa)) constitute an START domain.

The protein belongs to the STARD3 family. Homodimer. Interacts (via the MENTAL domain) with STARD3NL. Interacts (via phosphorylated FFAT motif) with VAPA (via MSP domain). Interacts (via phosphorylated FFAT motif) with VAPB (via MSP domain). Interacts (via phosphorylated FFAT motif) with MOSPD2 (via MSP domain); this interaction allows enrichment of MOSPD2 around endosomes. Post-translationally, phosphorylation at Ser-209 is necessary and sufficient for the direct interaction of the phosphorylated FFAT motif with the MSP domain of MOSPD2, VAPA and VAPB and allows the tethering of two membranes that participates in the formation of ER-endosome contacts. Phosphorylation of the FFAT motif leads to conformation changes. Additional phosphorylations around the core FFAT motif (QFYSPPE) are not essential but strengthen the interaction with MOSPD2, VAPA and VAPB. Phosphorylation at Ser-209 of FFAT motif drives membrane tethering between the endoplasmic reticulum and late endosomes via interaction with VAPA and VAPB that in turn allows the efficient transport of sterol mediated by the START domain. As to expression, expressed in retina.

The protein resides in the late endosome membrane. The catalysed reaction is cholesterol(in) = cholesterol(out). Sterol-binding protein that mediates cholesterol transport from the endoplasmic reticulum to endosomes. The sterol transport mechanism is triggered by phosphorylation of FFAT motif that leads to membrane tethering between the endoplasmic reticulum and late endosomes via interaction with VAPA and VAPB. Acts as a lipid transfer protein that redirects sterol to the endosome at the expense of the cell membrane and favors membrane formation inside endosomes. May also mediate cholesterol transport between other membranes, such as mitochondria membrane or cell membrane. However, such results need additional experimental evidences; probably mainly mediates cholesterol transport from the endoplasmic reticulum to endosomes. Does not activate transcriptional cholesterol sensing. Able to bind other lipids, such as lutein, a xanthophyll carotenoids that form the macular pigment of the retina. This chain is StAR-related lipid transfer protein 3, found in Homo sapiens (Human).